The chain runs to 502 residues: Maturase K (502 aa).

It belongs to the intron maturase 2 family. MatK subfamily.

The protein localises to the plastid. It is found in the chloroplast. In terms of biological role, usually encoded in the trnK tRNA gene intron. Probably assists in splicing its own and other chloroplast group II introns. The chain is Maturase K from Spiraea cantoniensis (Reeve's meadowsweet).